The following is a 90-amino-acid chain: Small ribosomal subunit protein bS16 (90 aa).

This sequence belongs to the bacterial ribosomal protein bS16 family.

This is Small ribosomal subunit protein bS16 from Lactococcus lactis subsp. lactis (strain IL1403) (Streptococcus lactis).